An 838-amino-acid chain; its full sequence is Ribonucleoside-diphosphate reductase large subunit (838 aa).

One can recognise an ATP-cone domain in the interval 6–97 (KLVTKRDGSV…VTALHKTTTE (92 aa)). Residues 10–11 (KR), 16–22 (EPYDEKV), threonine 58, and aspartate 62 contribute to the ATP site. GDP is bound at residue serine 227. The cysteines at positions 228 and 454 are disulfide-linked. DTTP contacts are provided by residues 236–238 (DSI), lysine 253, arginine 266, and 273–274 (AG). Asparagine 437 is a GDP binding site. Asparagine 437 functions as the Proton acceptor in the catalytic mechanism. Cysteine 439 functions as the Cysteine radical intermediate in the catalytic mechanism. GDP-binding positions include glutamate 441 and 626 to 629 (TAST). Residue glutamate 441 is the Proton acceptor of the active site. Over residues 780–794 (KELPKPDKQSKEEVH) the composition is skewed to basic and acidic residues. The segment at 780–838 (KELPKPDKQSKEEVHGSVGRGKRKRVGEKPTANHSNAGAPNLNGPPDTDGDGGCLNCGS) is disordered.

Belongs to the ribonucleoside diphosphate reductase large chain family. Heterodimer of a large and a small subunit.

The enzyme catalyses a 2'-deoxyribonucleoside 5'-diphosphate + [thioredoxin]-disulfide + H2O = a ribonucleoside 5'-diphosphate + [thioredoxin]-dithiol. It carries out the reaction dCDP + [thioredoxin]-disulfide + H2O = CDP + [thioredoxin]-dithiol. Its activity is regulated as follows. Under complex allosteric control mediated by deoxynucleoside triphosphates and ATP binding to separate specificity and activation sites on the large subunit. The type of nucleotide bound at the specificity site determines substrate preference. It seems probable that ATP makes the enzyme reduce CDP and UDP, dGTP favors ADP reduction and dTTP favors GDP reduction. Stimulated by ATP and inhibited by dATP binding to the activity site. Provides the precursors necessary for DNA synthesis. Catalyzes the rate limiting step in the de novo synthesis of deoxyribonucleotides by directly reducing ribonucleotides to the corresponding deoxyribonucleotides. This is Ribonucleoside-diphosphate reductase large subunit (RNR1) from Trypanosoma brucei brucei.